The sequence spans 399 residues: 4-hydroxy-3-methylbut-2-enyl diphosphate reductase (399 aa).

Cys66 lines the [4Fe-4S] cluster pocket. His96 lines the (2E)-4-hydroxy-3-methylbut-2-enyl diphosphate pocket. His96 is a binding site for dimethylallyl diphosphate. His96 lines the isopentenyl diphosphate pocket. A [4Fe-4S] cluster-binding site is contributed by Cys157. His185 contacts (2E)-4-hydroxy-3-methylbut-2-enyl diphosphate. Residue His185 participates in dimethylallyl diphosphate binding. Residue His185 coordinates isopentenyl diphosphate. Glu187 acts as the Proton donor in catalysis. A (2E)-4-hydroxy-3-methylbut-2-enyl diphosphate-binding site is contributed by Thr250. Position 288 (Cys288) interacts with [4Fe-4S] cluster. Residues Ser317, Ser318, Asn319, and Ser380 each coordinate (2E)-4-hydroxy-3-methylbut-2-enyl diphosphate. Dimethylallyl diphosphate contacts are provided by Ser317, Ser318, Asn319, and Ser380. Isopentenyl diphosphate-binding residues include Ser317, Ser318, Asn319, and Ser380.

The protein belongs to the IspH family. Requires [4Fe-4S] cluster as cofactor.

It carries out the reaction isopentenyl diphosphate + 2 oxidized [2Fe-2S]-[ferredoxin] + H2O = (2E)-4-hydroxy-3-methylbut-2-enyl diphosphate + 2 reduced [2Fe-2S]-[ferredoxin] + 2 H(+). The catalysed reaction is dimethylallyl diphosphate + 2 oxidized [2Fe-2S]-[ferredoxin] + H2O = (2E)-4-hydroxy-3-methylbut-2-enyl diphosphate + 2 reduced [2Fe-2S]-[ferredoxin] + 2 H(+). Its pathway is isoprenoid biosynthesis; dimethylallyl diphosphate biosynthesis; dimethylallyl diphosphate from (2E)-4-hydroxy-3-methylbutenyl diphosphate: step 1/1. The protein operates within isoprenoid biosynthesis; isopentenyl diphosphate biosynthesis via DXP pathway; isopentenyl diphosphate from 1-deoxy-D-xylulose 5-phosphate: step 6/6. Functionally, catalyzes the conversion of 1-hydroxy-2-methyl-2-(E)-butenyl 4-diphosphate (HMBPP) into a mixture of isopentenyl diphosphate (IPP) and dimethylallyl diphosphate (DMAPP). Acts in the terminal step of the DOXP/MEP pathway for isoprenoid precursor biosynthesis. This chain is 4-hydroxy-3-methylbut-2-enyl diphosphate reductase, found in Synechococcus sp. (strain CC9605).